Reading from the N-terminus, the 206-residue chain is Large ribosomal subunit protein uL4 (206 aa).

Belongs to the universal ribosomal protein uL4 family. As to quaternary structure, part of the 50S ribosomal subunit.

Its function is as follows. One of the primary rRNA binding proteins, this protein initially binds near the 5'-end of the 23S rRNA. It is important during the early stages of 50S assembly. It makes multiple contacts with different domains of the 23S rRNA in the assembled 50S subunit and ribosome. Functionally, forms part of the polypeptide exit tunnel. In Cereibacter sphaeroides (strain KD131 / KCTC 12085) (Rhodobacter sphaeroides), this protein is Large ribosomal subunit protein uL4.